Here is a 1036-residue protein sequence, read N- to C-terminus: MDNEDKVSFPAKEEKVLTFWKEQNIFQKTLENRDGSPTFSFYDGPPFATGLPHYGHLLAGTIKDVVCRYATMDGHYVPRRFGWDCHGVPVEYEVEKSLGLTEPGAIDRFGIANFNEECRKIVFRYVDEWKYFVDRIGRWVDFSATWKTMDLSFMESVWWVFHSLYKQGLVYEGTKVVPFSTKLGTPLSNFEAGQNYKEVDDPSVVAKFALQDDQGILLAWTTTPWTLVSNMALAVHPGLTYVRIQDKESGEEYILGQESLARWFPDRESYKWIGQLSGESLVGRRYCPLFPYFQDQQDRGAFRVIPADFIEESEGTGVVHMAPAFGEADFFACQEHNVPLVCPVDNQGCFTSEVTDFVGEYIKFADKGIARRLKNENKLFYQGTIRHRYPFCWRTDSPLIYKAVNSWFVSVEKVKHKMLKANESIHWTPGHIKHGRFGKWLEGARDWAISRNRYWGTPIPIWRSEDGELLVIRSIQELEELSGQKIVDLHRHFIDEIVIHKNGKSFHRIPYVFDCWFDSGAMPYAQNHYPFERAEETEARFPADFIAEGLDQTRGWFYTLTVIAAALFDQPAFKNVIVNGIVLAEDGNKMSKRLNNYPSPKKIMDTYGADALRLYLLNSVVVKAEDLRFSDKGVEAVLKQVLLPLSNALAFYKTYAELYGFSPNETTDLELAEIDRWILSSLYSLVGKTRENMAQYDLHAAVSPFIDFIEDLTNWYIRRSRRRFWESEDSPDRRAAFATLYEVLMVFSKIIAPFIPFTAEDMYQQLRVETDPESVHLCDFPHVVLEKILPDLEKKMQDIREIVALGHSLRKEHKLKVRQPLQHMYIVGAKERMAALAQVDSLIGEELNVKEVHFCSETPEYVTTLVKPNFRSLGKRVGNRLPEIQKALAGLSQEQIQAFMHNGFMVLSLGEETISLNEEDITVSWEAAPGFVARSSASFVAILDCQLTSPLIMEGIAREIVNKINTMRRNGKLHVSDRIAIRLHAPKIVQEAFSQYEEYICEETLTTSVSFIDDKEGEEWDVNGHAVSLSLEVIGH.

The 'HIGH' region signature appears at 46–56 (PFATGLPHYGH). Positions 589-593 (KMSKR) match the 'KMSKS' region motif. Lysine 592 serves as a coordination point for ATP.

This sequence belongs to the class-I aminoacyl-tRNA synthetase family. IleS type 2 subfamily. In terms of assembly, monomer. Zn(2+) serves as cofactor.

It localises to the cytoplasm. The catalysed reaction is tRNA(Ile) + L-isoleucine + ATP = L-isoleucyl-tRNA(Ile) + AMP + diphosphate. Functionally, catalyzes the attachment of isoleucine to tRNA(Ile). As IleRS can inadvertently accommodate and process structurally similar amino acids such as valine, to avoid such errors it has two additional distinct tRNA(Ile)-dependent editing activities. One activity is designated as 'pretransfer' editing and involves the hydrolysis of activated Val-AMP. The other activity is designated 'posttransfer' editing and involves deacylation of mischarged Val-tRNA(Ile). The protein is Isoleucine--tRNA ligase of Chlamydia muridarum (strain MoPn / Nigg).